The following is a 311-amino-acid chain: Serine/threonine-protein phosphatase 4 catalytic subunit A (311 aa).

Residues D58, H60, D86, and N118 each coordinate Mn(2+). Catalysis depends on H119, which acts as the Proton donor. Residues H168 and H242 each coordinate Mn(2+). Position 311 is a leucine methyl ester (L311).

It belongs to the PPP phosphatase family. PP-4 (PP-X) subfamily. As to quaternary structure, serine/threonine-protein phosphatase 4 (PP4) occurs in different assemblies of the catalytic and one or more regulatory subunits. Requires Mn(2+) as cofactor.

It is found in the cytoplasm. The protein resides in the cytoskeleton. Its subcellular location is the microtubule organizing center. The protein localises to the centrosome. The catalysed reaction is O-phospho-L-seryl-[protein] + H2O = L-seryl-[protein] + phosphate. It catalyses the reaction O-phospho-L-threonyl-[protein] + H2O = L-threonyl-[protein] + phosphate. Functionally, protein phosphatase that regulates many processes such as microtubule organization at centrosomes. The sequence is that of Serine/threonine-protein phosphatase 4 catalytic subunit A (ppp4ca) from Danio rerio (Zebrafish).